We begin with the raw amino-acid sequence, 431 residues long: Signal recognition particle 54 kDa protein (431 aa).

GTP contacts are provided by residues 105-112 (GVEGSGKT), 185-189 (DTAGR), and 243-246 (TKMD).

This sequence belongs to the GTP-binding SRP family. SRP54 subfamily. Part of the signal recognition particle protein translocation system, which is composed of SRP and FtsY. Archaeal SRP consists of a 7S RNA molecule of 300 nucleotides and two protein subunits: SRP54 and SRP19.

Its subcellular location is the cytoplasm. The catalysed reaction is GTP + H2O = GDP + phosphate + H(+). Involved in targeting and insertion of nascent membrane proteins into the cytoplasmic membrane. Binds to the hydrophobic signal sequence of the ribosome-nascent chain (RNC) as it emerges from the ribosomes. The SRP-RNC complex is then targeted to the cytoplasmic membrane where it interacts with the SRP receptor FtsY. The polypeptide is Signal recognition particle 54 kDa protein (Pyrobaculum calidifontis (strain DSM 21063 / JCM 11548 / VA1)).